We begin with the raw amino-acid sequence, 167 residues long: Inclusion membrane protein G (167 aa).

Transmembrane regions (helical) follow at residues 37-57 (LSLFAVFASGSLSILSAAVLF) and 63-83 (VLPYLLILTTALLGFVCAVIV). Disordered stretches follow at residues 97–136 (KRSPEEIEGAARPSDQQESGGRLSEESASPQASPTSSTFG) and 148–167 (VSGAFDDINKDNSRSRSHSF). Residues 122–134 (ESASPQASPTSST) are compositionally biased toward low complexity. The short motif at 161–166 (RSRSHS) is the Phosphorylation-dependent binding motif element. A Phosphoserine modification is found at Ser-166.

Phosphorylated by chlamydial kinase Pnk1.

The protein localises to the secreted. The protein resides in the host vacuole. It is found in the host pathogen-containing vacuole. Its subcellular location is the host pathogen-containing vacuole membrane. Functionally, inclusion membrane protein probably involved in early modification events of the chlamydial inclusion. Binds to the host cell 14-3-3 beta (YWHAB); phosphorylation of Ser-166 is probably required. The sequence is that of Inclusion membrane protein G (incG) from Chlamydia trachomatis serovar D (strain ATCC VR-885 / DSM 19411 / UW-3/Cx).